Consider the following 609-residue polypeptide: Aminopeptidase ltah-1.1 (609 aa).

Residues Gln137–Gln139 and Pro268–Glu273 contribute to the substrate site. Residue His297 participates in Zn(2+) binding. Glu298 (proton acceptor) is an active-site residue. His301 and Glu320 together coordinate Zn(2+). Tyr387 serves as the catalytic Proton donor. Position 564–566 (Arg564–Lys566) interacts with substrate.

Belongs to the peptidase M1 family. The cofactor is Zn(2+).

The protein resides in the cytoplasm. The enzyme catalyses Release of N-terminal Arg and Lys from oligopeptides when P1' is not Pro. Also acts on arylamides of Arg and Lys.. Its function is as follows. Aminopeptidase which preferentially removes N-terminal Arg and Lys residues from peptides and proteins. In Caenorhabditis elegans, this protein is Aminopeptidase ltah-1.1.